The following is a 561-amino-acid chain: Putative ABC transporter ATP-binding protein SAV_5847 (561 aa).

The region spanning 2-243 (IRFEDVSVTY…SPVYPPVVDL (242 aa)) is the ABC transporter 1 domain. 36 to 43 (GPSGVGKS) provides a ligand contact to ATP. A disordered region spans residues 268 to 299 (ERLAATETPTPTATATATAAPAPSPSRPRRPR). Residues 272 to 288 (ATETPTPTATATATAAP) are compositionally biased toward low complexity. In terms of domain architecture, ABC transporter 2 spans 315–543 (AAVEALAVRR…SPSFAPQVTK (229 aa)). Residue 347–354 (GRNGAGKS) participates in ATP binding.

This sequence belongs to the ABC transporter superfamily.

It localises to the cell membrane. Probably part of an ABC transporter complex. Responsible for energy coupling to the transport system. The sequence is that of Putative ABC transporter ATP-binding protein SAV_5847 from Streptomyces avermitilis (strain ATCC 31267 / DSM 46492 / JCM 5070 / NBRC 14893 / NCIMB 12804 / NRRL 8165 / MA-4680).